Here is a 423-residue protein sequence, read N- to C-terminus: Kynureninase (423 aa).

Pyridoxal 5'-phosphate contacts are provided by residues L105, S106, 133–136 (FPSD), D218, H221, and Y243. N6-(pyridoxal phosphate)lysine is present on K244. Residues W273 and N301 each coordinate pyridoxal 5'-phosphate.

This sequence belongs to the kynureninase family. As to quaternary structure, homodimer. It depends on pyridoxal 5'-phosphate as a cofactor.

It carries out the reaction L-kynurenine + H2O = anthranilate + L-alanine + H(+). The catalysed reaction is 3-hydroxy-L-kynurenine + H2O = 3-hydroxyanthranilate + L-alanine + H(+). It participates in amino-acid degradation; L-kynurenine degradation; L-alanine and anthranilate from L-kynurenine: step 1/1. The protein operates within cofactor biosynthesis; NAD(+) biosynthesis; quinolinate from L-kynurenine: step 2/3. In terms of biological role, catalyzes the cleavage of L-kynurenine (L-Kyn) and L-3-hydroxykynurenine (L-3OHKyn) into anthranilic acid (AA) and 3-hydroxyanthranilic acid (3-OHAA), respectively. The sequence is that of Kynureninase from Xanthomonas euvesicatoria pv. vesicatoria (strain 85-10) (Xanthomonas campestris pv. vesicatoria).